Reading from the N-terminus, the 224-residue chain is Uracil-DNA glycosylase (224 aa).

The Proton acceptor role is filled by Asp62.

This sequence belongs to the uracil-DNA glycosylase (UDG) superfamily. UNG family.

The protein resides in the cytoplasm. It catalyses the reaction Hydrolyzes single-stranded DNA or mismatched double-stranded DNA and polynucleotides, releasing free uracil.. Its function is as follows. Excises uracil residues from the DNA which can arise as a result of misincorporation of dUMP residues by DNA polymerase or due to deamination of cytosine. The protein is Uracil-DNA glycosylase of Aliivibrio fischeri (strain ATCC 700601 / ES114) (Vibrio fischeri).